We begin with the raw amino-acid sequence, 420 residues long: Meiotically up-regulated gene 137 protein (420 aa).

The 223-residue stretch at 10-232 (NEKPLGDQRA…QNSLTPQKKI (223 aa)) folds into the BAR domain. In terms of domain architecture, SH3 spans 279 to 345 (KETVFVKAIY…PVNYCTRIYD (67 aa)). The interval 398-420 (SQNVEASSQPIKIRKPLPEIPNK) is disordered.

The protein localises to the cytoplasm. It is found in the nucleus. Has a role in meiosis and sporulation. In Schizosaccharomyces pombe (strain 972 / ATCC 24843) (Fission yeast), this protein is Meiotically up-regulated gene 137 protein (mug137).